The chain runs to 406 residues: Glutamyl-tRNA reductase (406 aa).

Substrate is bound by residues 51–54 (TCNR), Ser-101, 106–108 (ESE), and Gln-112. Catalysis depends on Cys-52, which acts as the Nucleophile. Residue 180 to 185 (GAGSIG) coordinates NADP(+).

Belongs to the glutamyl-tRNA reductase family. As to quaternary structure, homodimer.

It catalyses the reaction (S)-4-amino-5-oxopentanoate + tRNA(Glu) + NADP(+) = L-glutamyl-tRNA(Glu) + NADPH + H(+). It participates in porphyrin-containing compound metabolism; protoporphyrin-IX biosynthesis; 5-aminolevulinate from L-glutamyl-tRNA(Glu): step 1/2. In terms of biological role, catalyzes the NADPH-dependent reduction of glutamyl-tRNA(Glu) to glutamate 1-semialdehyde (GSA). The sequence is that of Glutamyl-tRNA reductase from Caldivirga maquilingensis (strain ATCC 700844 / DSM 13496 / JCM 10307 / IC-167).